Consider the following 147-residue polypeptide: UPF0178 protein Nther_1836 (147 aa).

Belongs to the UPF0178 family.

The polypeptide is UPF0178 protein Nther_1836 (Natranaerobius thermophilus (strain ATCC BAA-1301 / DSM 18059 / JW/NM-WN-LF)).